Consider the following 520-residue polypeptide: Glutamate--cysteine ligase (520 aa).

It belongs to the glutamate--cysteine ligase type 1 family. Type 1 subfamily.

It carries out the reaction L-cysteine + L-glutamate + ATP = gamma-L-glutamyl-L-cysteine + ADP + phosphate + H(+). It functions in the pathway sulfur metabolism; glutathione biosynthesis; glutathione from L-cysteine and L-glutamate: step 1/2. The chain is Glutamate--cysteine ligase from Serratia proteamaculans (strain 568).